The primary structure comprises 247 residues: LHFPL tetraspan subfamily member 4 protein (247 aa).

Helical transmembrane passes span 22-42, 97-117, 127-147, and 178-198; these read IGVLWAIFTICFAIINVVVFI, FFVLLSMVLILGCITCFALFF, ICAWMQLLAALCLVLGCMIFP, and ILAIIGILNALILSFLAFVLG.

The protein belongs to the LHFP family. As to quaternary structure, interacts with GABA(A) receptor subunits. Interacts with GABRB3. Interacts with GABRA2. Interacts with GABRG2. Identified in a complex of 720 kDa composed of LHFPL4, NLGN2, GABRA1, GABRB2, GABRG2 and GABRB3. Interacts with GABRA1. Interacts with NLGN2; leading to mutual regulation of protein level and synaptic clustering.

Its subcellular location is the cell projection. It localises to the dendrite. It is found in the postsynaptic cell membrane. Its function is as follows. Plays a role in the regulation of inhibitory synapse formation and function by being involved in maintening gamma-aminobutyric acid receptors (GABAARs) clustering and their associated scaffold proteins at inhibitory synaptic sites. Acts in concert with NLGN2 to recruit or stabilize GABAARs. The protein is LHFPL tetraspan subfamily member 4 protein of Bos taurus (Bovine).